We begin with the raw amino-acid sequence, 1579 residues long: tRNA (guanosine(18)-2'-O)-methyltransferase TARBP1 (1579 aa).

Residue M1 is modified to N-acetylmethionine. 5 residues coordinate S-adenosyl-L-homocysteine: V1501, G1524, I1544, Q1546, and L1553.

Belongs to the class IV-like SAM-binding methyltransferase superfamily. RNA methyltransferase TrmH family. In terms of assembly, monomer and homodimer.

The enzyme catalyses guanosine(18) in tRNA + S-adenosyl-L-methionine = 2'-O-methylguanosine(18) in tRNA + S-adenosyl-L-homocysteine + H(+). S-adenosyl-L-methionine-dependent 2'-O-ribose methyltransferase that catalyzes the formation of 2'-O-methylguanosine at position 18 (Gm18) in a subset of tRNA. Selectively mediates Gm18 methylation of tRNAGln-TTG/CTG and tRNASer-TGA/GCT. Gm18 modification can enhance the stability of modified tRNAs. This chain is tRNA (guanosine(18)-2'-O)-methyltransferase TARBP1, found in Mus musculus (Mouse).